A 337-amino-acid chain; its full sequence is Viral cathepsin (337 aa).

Residues 1 to 16 form the signal peptide; the sequence is MNKLLILFLLLNAALT. Positions 17–126 are cleaved as a propeptide — activation peptide; that stretch reads RQDNHASANN…VVDGPAQRQR (110 aa). 3 cysteine pairs are disulfide-bonded: cysteine 147-cysteine 188, cysteine 181-cysteine 221, and cysteine 276-cysteine 324. The active site involves cysteine 150. Catalysis depends on residues histidine 283 and asparagine 303.

The protein belongs to the peptidase C1 family. In terms of processing, synthesized as an inactive proenzyme and activated by proteolytic removal of the inhibitory propeptide.

The enzyme catalyses Endopeptidase of broad specificity, hydrolyzing substrates of both cathepsin L and cathepsin B.. Functionally, cysteine protease that plays an essential role in host liquefaction to facilitate horizontal transmission of the virus. May participate in the degradation of foreign protein expressed by the baculovirus system. The polypeptide is Viral cathepsin (VCATH) (Lepidoptera (butterflies and moths)).